A 1047-amino-acid polypeptide reads, in one-letter code: Atrial natriuretic peptide receptor 2 (1047 aa).

A signal peptide spans 1–16 (MALPSLLLVVAALAGG). At 17–458 (VRPPGARNLT…DKTPLSTLAI (442 aa)) the chain is on the extracellular side. N-linked (GlcNAc...) asparagine glycosylation is found at N24 and N35. Cysteines 75 and 101 form a disulfide. Residues N161, N195, N244, N277, and N349 are each glycosylated (N-linked (GlcNAc...) asparagine). A helical transmembrane segment spans residues 459 to 478 (VALGTGVTFIMFGVSSFLIF). At 479–1047 (RKLMLEKELA…GEQKGPPGLL (569 aa)) the chain is on the cytoplasmic side. The residue at position 513 (S513) is a Phosphoserine. A Protein kinase domain is found at 513-786 (SRLTLSLRGS…PDFGQIKGFI (274 aa)). T516 is modified (phosphothreonine). S518, S522, S523, and S526 each carry phosphoserine. T529 carries the phosphothreonine modification. Residues 861 to 991 (TIYFSDIVGF…DTVNTASRME (131 aa)) form the Guanylate cyclase domain.

Belongs to the adenylyl cyclase class-4/guanylyl cyclase family. Post-translationally, phosphorylated. Phosphorylation of the protein kinase-like domain is required for full activation by CNP. Glycosylated. Widely expressed. Expressed in the columnar proliferating and prehypertrophic chondrocyte layers of the tibia.

It is found in the cell membrane. The enzyme catalyses GTP = 3',5'-cyclic GMP + diphosphate. In terms of biological role, receptor for the C-type natriuretic peptide NPPC/CNP hormone. Has guanylate cyclase activity upon binding of its ligand. May play a role in the regulation of skeletal growth. In Mus musculus (Mouse), this protein is Atrial natriuretic peptide receptor 2 (Npr2).